We begin with the raw amino-acid sequence, 226 residues long: UPF0758 protein Spy49_0870 (226 aa).

One can recognise an MPN domain in the interval 103–225 (SVLTSVQVAE…YYSFREKSTL (123 aa)). Zn(2+) contacts are provided by histidine 174, histidine 176, and aspartate 187. The short motif at 174–187 (HNHPSGNIEPSSND) is the JAMM motif element.

This sequence belongs to the UPF0758 family.

In Streptococcus pyogenes serotype M49 (strain NZ131), this protein is UPF0758 protein Spy49_0870.